The following is a 224-amino-acid chain: Putative cytochrome c-type biogenesis protein DbsD-like (224 aa).

5 helical membrane-spanning segments follow: residues 32–52 (FIFL…ILPV), 74–94 (FLFC…ATLI), 104–124 (GIPT…LNIV), 150–170 (GIGI…LVWI), and 176–196 (IFTG…PIII).

It belongs to the DsbD family.

The protein resides in the plastid. Its subcellular location is the chloroplast membrane. Its function is as follows. Could be involved in cytochrome c synthesis. The chain is Putative cytochrome c-type biogenesis protein DbsD-like from Pyropia yezoensis (Susabi-nori).